Reading from the N-terminus, the 265-residue chain is DNA-binding dual transcriptional regulator Rns (265 aa).

His-20 and Arg-75 together coordinate decanoate. One can recognise an HTH araC/xylS-type domain in the interval 164–261; sequence DKVRNLIEKD…GVTPKQFFTY (98 aa). 2 consecutive DNA-binding regions (H-T-H motif) follow at residues 181–202 and 228–251; these read GIIA…ESEN and ISQI…NKHY.

As to quaternary structure, homodimer; each subunit binds one decanoate molecule.

The protein localises to the cytoplasm. With respect to regulation, rns-dependent expression of pilins and outer membrane proteins CexE-alpha and CexE-epsilon are inhibited in vivo by decanoic acid (decanoate); has no effect on expression of DnaK or flagellins. Decanoate relieves Rns-dependent repression of nlpA. A transcription factor required for the expression of the CS1 and CS2 adhesins of enterotoxigenic E.coli. Required for expression of pilins and some outer membrane lipoproteins. Represses expression of nlpA. The polypeptide is DNA-binding dual transcriptional regulator Rns (Escherichia coli).